A 230-amino-acid chain; its full sequence is Cytidylate kinase (230 aa).

ATP is bound at residue 14 to 22; that stretch reads GPSGVGKSS.

It belongs to the cytidylate kinase family. Type 1 subfamily.

It localises to the cytoplasm. The catalysed reaction is CMP + ATP = CDP + ADP. The enzyme catalyses dCMP + ATP = dCDP + ADP. The protein is Cytidylate kinase of Buchnera aphidicola subsp. Baizongia pistaciae (strain Bp).